The sequence spans 117 residues: Phosphoribosyl-ATP pyrophosphatase (117 aa).

A compositionally biased stretch (basic and acidic residues) spans 96 to 105 (GVSGIEEKLS). The segment at 96–117 (GVSGIEEKLSRSQNQPEPTKAE) is disordered. The segment covering 106-117 (RSQNQPEPTKAE) has biased composition (polar residues).

This sequence belongs to the PRA-PH family.

It localises to the cytoplasm. It catalyses the reaction 1-(5-phospho-beta-D-ribosyl)-ATP + H2O = 1-(5-phospho-beta-D-ribosyl)-5'-AMP + diphosphate + H(+). Its pathway is amino-acid biosynthesis; L-histidine biosynthesis; L-histidine from 5-phospho-alpha-D-ribose 1-diphosphate: step 2/9. The chain is Phosphoribosyl-ATP pyrophosphatase from Nitrosomonas eutropha (strain DSM 101675 / C91 / Nm57).